A 439-amino-acid chain; its full sequence is Beta-1,3-galactosyl-O-glycosyl-glycoprotein beta-1,6-N-acetylglucosaminyltransferase (439 aa).

Topologically, residues 1 to 11 (MVGWKKKKLCR) are cytoplasmic. Residues 12-29 (GHHLWVLGCYMLLAVVSL) traverse the membrane as a helical; Signal-anchor for type II membrane protein segment. The Lumenal segment spans residues 30–439 (RLSLRFKCDV…RHKAIYGTEL (410 aa)). N-linked (GlcNAc...) asparagine; by host glycosylation is found at Asn71 and Asn107. 4 disulfides stabilise this stretch: Cys72/Cys229, Cys163/Cys383, Cys184/Cys211, and Cys392/Cys424.

This sequence belongs to the glycosyltransferase 14 family.

The protein resides in the host Golgi apparatus membrane. The catalysed reaction is a 3-O-[beta-D-galactosyl-(1-&gt;3)-N-acetyl-alpha-D-galactosaminyl]-L-seryl-[protein] + UDP-N-acetyl-alpha-D-glucosamine = 3-O-{beta-D-galactosyl-(1-&gt;3)-[N-acetyl-beta-D-glucosaminyl-(1-&gt;6)]-N-acetyl-alpha-D-galactosaminyl}-L-seryl-[protein] + UDP + H(+). It carries out the reaction a 3-O-[beta-D-galactosyl-(1-&gt;3)-N-acetyl-alpha-D-galactosaminyl]-L-threonyl-[protein] + UDP-N-acetyl-alpha-D-glucosamine = a 3-O-{beta-D-galactosyl-(1-&gt;3)-[N-acetyl-beta-D-glucosaminyl-(1-&gt;6)]-N-acetyl-alpha-D-galactosaminyl}-L-threonyl-[protein] + UDP + H(+). It catalyses the reaction a beta-D-Gal-(1-&gt;4)-beta-D-GlcNAc-(1-&gt;3)-beta-D-Gal-(1-&gt;4)-beta-D-GlcNAc derivative + UDP-N-acetyl-alpha-D-glucosamine = a beta-D-Gal-(1-&gt;4)-beta-D-GlcNAc-(1-&gt;3)-[beta-D-GlcNAc-(1-&gt;6)]-beta-D-Gal-(1-&gt;4)-N-acetyl-beta-D-glucosaminyl derivative + UDP + H(+). The enzyme catalyses 3-O-[N-acetyl-beta-D-glucosaminyl-(1-&gt;3)-N-acetyl-alpha-D-galactosaminyl]-L-seryl-[protein] + UDP-N-acetyl-alpha-D-glucosamine = 3-O-[N-acetyl-beta-D-glucosaminyl-(1-&gt;3)-[N-acetyl-beta-D-glucosaminyl-(1-&gt;6)]-N-acetyl-alpha-D-galactosaminyl]-L-seryl-[protein] + UDP + H(+). The catalysed reaction is a 3-O-[N-acetyl-beta-D-glucosaminyl-(1-&gt;3)-N-acetyl-alpha-D-galactosaminyl]-L-threonyl-[protein] + UDP-N-acetyl-alpha-D-glucosamine = 3-O-[N-acetyl-beta-D-glucosaminyl-(1-&gt;3)-[N-acetyl-beta-D-glucosaminyl-(1-&gt;6)]-N-acetyl-alpha-D-galactosaminyl]-L-threonyl-[protein] + UDP + H(+). The protein operates within protein modification; protein glycosylation. In terms of biological role, non-essential glycosyltransferase that can synthesize all known mucin beta 6 N-acetylglucosaminides. Mediates core 2 and core 4 O-glycan branching, 2 important steps in mucin-type biosynthesis. Has also I-branching enzyme activity by converting linear into branched poly-N-acetyllactosaminoglycans. Contributes to the post-translational modifications of structural proteins. This is Beta-1,3-galactosyl-O-glycosyl-glycoprotein beta-1,6-N-acetylglucosaminyltransferase (Bo17) from Bovine herpesvirus 4 (BoHV-4).